The primary structure comprises 227 residues: MKVSYHGHSVVKIEANGKVILIDPFLTGNPKTDLKAEDVKVDAILLSHGHGDHVGDTVELAKKNNAVVVAPFELATFLSWQGVNTHPMHIGGSHEFDFGKVKLTQAFHGSSYIDEENKTITYTGMPAGILFTAEEKTVYHAGDTALFSDMKLIGELNKVDLAFLPIGDNFTMGPEDAVLAAKWINAKTVVPMHYNTFPVIEQDPYQFVEKLQNCTGKVLEAGESITL.

This sequence belongs to the UPF0173 family.

The sequence is that of UPF0173 metal-dependent hydrolase BCB4264_A4722 from Bacillus cereus (strain B4264).